A 53-amino-acid polypeptide reads, in one-letter code: UPF0391 membrane protein ESA_03375 (53 aa).

Helical transmembrane passes span 4–24 and 28–48; these read WGII…GGLA and AGAA…SLFM.

Belongs to the UPF0391 family.

Its subcellular location is the cell membrane. The protein is UPF0391 membrane protein ESA_03375 of Cronobacter sakazakii (strain ATCC BAA-894) (Enterobacter sakazakii).